The chain runs to 216 residues: Probable nicotinate-nucleotide adenylyltransferase (216 aa).

It belongs to the NadD family.

The enzyme catalyses nicotinate beta-D-ribonucleotide + ATP + H(+) = deamido-NAD(+) + diphosphate. It participates in cofactor biosynthesis; NAD(+) biosynthesis; deamido-NAD(+) from nicotinate D-ribonucleotide: step 1/1. Its function is as follows. Catalyzes the reversible adenylation of nicotinate mononucleotide (NaMN) to nicotinic acid adenine dinucleotide (NaAD). The protein is Probable nicotinate-nucleotide adenylyltransferase of Citrifermentans bemidjiense (strain ATCC BAA-1014 / DSM 16622 / JCM 12645 / Bem) (Geobacter bemidjiensis).